Reading from the N-terminus, the 228-residue chain is L-ribulose-5-phosphate 4-epimerase UlaF (228 aa).

Residues 26-27 (GN), 43-44 (SG), and 72-73 (SS) contribute to the substrate site. Positions 74, 93, and 95 each coordinate Zn(2+). Residue aspartate 118 is the Proton donor/acceptor of the active site. Histidine 167 provides a ligand contact to Zn(2+). Tyrosine 225 acts as the Proton donor/acceptor in catalysis.

It belongs to the aldolase class II family. AraD/FucA subfamily. The cofactor is Zn(2+).

It catalyses the reaction L-ribulose 5-phosphate = D-xylulose 5-phosphate. It participates in cofactor degradation; L-ascorbate degradation; D-xylulose 5-phosphate from L-ascorbate: step 4/4. Functionally, catalyzes the isomerization of L-ribulose 5-phosphate to D-xylulose 5-phosphate. Is involved in the anaerobic L-ascorbate utilization. The polypeptide is L-ribulose-5-phosphate 4-epimerase UlaF (Shigella sonnei (strain Ss046)).